The following is a 208-amino-acid chain: Guanylate kinase (208 aa).

The 181-residue stretch at 4–184 (GTLYIVSAPS…ALMDFKAIIR (181 aa)) folds into the Guanylate kinase-like domain. 11–18 (APSGAGKS) lines the ATP pocket.

This sequence belongs to the guanylate kinase family.

It is found in the cytoplasm. It catalyses the reaction GMP + ATP = GDP + ADP. In terms of biological role, essential for recycling GMP and indirectly, cGMP. The polypeptide is Guanylate kinase (Photobacterium profundum (strain SS9)).